A 407-amino-acid chain; its full sequence is Inositol-tetrakisphosphate 1-kinase (407 aa).

1D-myo-inositol 1,3,4-trisphosphate is bound at residue Lys-18. Arg-106 and Lys-157 together coordinate ATP. Residues 117–341 (EAYMQDERIC…RSKLLAEQTG (225 aa)) enclose the ATP-grasp domain. Positions 167 and 199 each coordinate 1D-myo-inositol 1,3,4-trisphosphate. ATP-binding positions include 188 to 199 (QSFINHNAVLYK), Ser-214, Ser-232, and Ser-236. Asp-281, Asp-295, and Asn-297 together coordinate Mg(2+). Asn-297 is a 1D-myo-inositol 1,3,4-trisphosphate binding site.

Belongs to the ITPK1 family. As to quaternary structure, monomer. Mg(2+) serves as cofactor.

The enzyme catalyses 1D-myo-inositol 3,4,5,6-tetrakisphosphate + ATP = 1D-myo-inositol 1,3,4,5,6-pentakisphosphate + ADP + H(+). It carries out the reaction 1D-myo-inositol 1,3,4-trisphosphate + ATP = 1D-myo-inositol 1,3,4,5-tetrakisphosphate + ADP + H(+). It catalyses the reaction 1D-myo-inositol 1,3,4-trisphosphate + ATP = 1D-myo-inositol 1,3,4,6-tetrakisphosphate + ADP + H(+). The catalysed reaction is 1D-myo-inositol 3,4,6-trisphosphate + ATP = 1D-myo-inositol 1,3,4,6-tetrakisphosphate + ADP + H(+). The enzyme catalyses 1D-myo-inositol 1,3,4-trisphosphate + 1D-myo-inositol 1,3,4,5,6-pentakisphosphate = 1D-myo-inositol 3,4,5,6-tetrakisphosphate + 1D-myo-inositol 1,3,4,6-tetrakisphosphate. It carries out the reaction 1D-myo-inositol 1,3,4-trisphosphate + 1D-myo-inositol 1,3,4,5,6-pentakisphosphate = 1D-myo-inositol 3,4,5,6-tetrakisphosphate + 1D-myo-inositol 1,3,4,5-tetrakisphosphate. Kinase that can phosphorylate various inositol polyphosphate such as Ins(3,4,5,6)P4 or Ins(1,3,4)P3. Phosphorylates Ins(3,4,5,6)P4 at position 1 to form Ins(1,3,4,5,6)P5. This reaction is thought to have regulatory importance, since Ins(3,4,5,6)P4 is an inhibitor of plasma membrane Ca(2+)-activated Cl(-) channels, while Ins(1,3,4,5,6)P5 is not. Also phosphorylates Ins(1,3,4)P3 on O-5 and O-6 to form Ins(1,3,4,6)P4, an essential molecule in the hexakisphosphate (InsP6) pathway. Also acts as an inositol polyphosphate phosphatase that dephosphorylates Ins(1,3,4,5)P4 and Ins(1,3,4,6)P4 to Ins(1,3,4)P3, and Ins(1,3,4,5,6)P5 to Ins(3,4,5,6)P4. May also act as an isomerase that interconverts the inositol tetrakisphosphate isomers Ins(1,3,4,5)P4 and Ins(1,3,4,6)P4 in the presence of ADP and magnesium. Probably acts as the rate-limiting enzyme of the InsP6 pathway. Modifies TNF-alpha-induced apoptosis by interfering with the activation of TNFRSF1A-associated death domain. Plays an important role in MLKL-mediated necroptosis. Produces highly phosphorylated inositol phosphates such as inositolhexakisphosphate (InsP6) which bind to MLKL mediating the release of an N-terminal auto-inhibitory region leading to its activation. Essential for activated phospho-MLKL to oligomerize and localize to the cell membrane during necroptosis. The polypeptide is Inositol-tetrakisphosphate 1-kinase (ITPK1) (Gallus gallus (Chicken)).